The primary structure comprises 261 residues: Methionine aminopeptidase (261 aa).

His-78 is a binding site for substrate. Asp-96, Asp-107, and His-170 together coordinate a divalent metal cation. His-177 serves as a coordination point for substrate. A divalent metal cation is bound by residues Glu-202 and Glu-233.

Belongs to the peptidase M24A family. Methionine aminopeptidase type 1 subfamily. As to quaternary structure, monomer. Co(2+) is required as a cofactor. Zn(2+) serves as cofactor. It depends on Mn(2+) as a cofactor. The cofactor is Fe(2+).

The enzyme catalyses Release of N-terminal amino acids, preferentially methionine, from peptides and arylamides.. Removes the N-terminal methionine from nascent proteins. The N-terminal methionine is often cleaved when the second residue in the primary sequence is small and uncharged (Met-Ala-, Cys, Gly, Pro, Ser, Thr, or Val). Requires deformylation of the N(alpha)-formylated initiator methionine before it can be hydrolyzed. This chain is Methionine aminopeptidase, found in Buchnera aphidicola subsp. Schizaphis graminum (strain Sg).